The following is a 311-amino-acid chain: tRNA dimethylallyltransferase (311 aa).

13 to 20 (GPTASGKT) is an ATP binding site. 15–20 (TASGKT) lines the substrate pocket. Interaction with substrate tRNA stretches follow at residues 38-41 (DSMQ) and 166-170 (QRVLR).

The protein belongs to the IPP transferase family. As to quaternary structure, monomer. The cofactor is Mg(2+).

The catalysed reaction is adenosine(37) in tRNA + dimethylallyl diphosphate = N(6)-dimethylallyladenosine(37) in tRNA + diphosphate. Its function is as follows. Catalyzes the transfer of a dimethylallyl group onto the adenine at position 37 in tRNAs that read codons beginning with uridine, leading to the formation of N6-(dimethylallyl)adenosine (i(6)A). This Staphylococcus aureus (strain Mu3 / ATCC 700698) protein is tRNA dimethylallyltransferase.